Consider the following 703-residue polypeptide: Polyribonucleotide nucleotidyltransferase (703 aa).

D486 and D492 together coordinate Mg(2+). The region spanning 553–612 (PKIEIIHINPDKIRDVIGPGGKKINEIIDATGVKLDIEQDGTVFIGSSDASMIEAAKKLI) is the KH domain. Residues 622 to 690 (GQIYMATVKR…KQGRVNASRK (69 aa)) enclose the S1 motif domain.

Belongs to the polyribonucleotide nucleotidyltransferase family. The cofactor is Mg(2+).

It localises to the cytoplasm. The catalysed reaction is RNA(n+1) + phosphate = RNA(n) + a ribonucleoside 5'-diphosphate. Its function is as follows. Involved in mRNA degradation. Catalyzes the phosphorolysis of single-stranded polyribonucleotides processively in the 3'- to 5'-direction. This is Polyribonucleotide nucleotidyltransferase from Macrococcus caseolyticus (strain JCSC5402) (Macrococcoides caseolyticum).